The sequence spans 242 residues: DNA repair protein RecO (242 aa).

Belongs to the RecO family. As to quaternary structure, monomer.

Functionally, involved in DNA repair and RecF pathway recombination. This Shigella flexneri serotype 5b (strain 8401) protein is DNA repair protein RecO.